Reading from the N-terminus, the 181-residue chain is TATA-box-binding protein (181 aa).

2 repeat units span residues 7 to 83 (VVNV…VKEL) and 98 to 173 (VQNM…SKTL).

It belongs to the TBP family.

Functionally, general factor that plays a role in the activation of archaeal genes transcribed by RNA polymerase. Binds specifically to the TATA box promoter element which lies close to the position of transcription initiation. The sequence is that of TATA-box-binding protein from Methanococcus maripaludis (strain DSM 14266 / JCM 13030 / NBRC 101832 / S2 / LL).